The sequence spans 477 residues: Delayed-rectifier potassium channel regulatory subunit KCNS2 (477 aa).

The Cytoplasmic portion of the chain corresponds to 1–184 (MTRQSLWDLS…LALDNPGYSV (184 aa)). The chain crosses the membrane as a helical span at residues 185 to 206 (LSRVFSVLSILVVLGSIITMCL). Residues 207–225 (NSLPDFQIPDSQGNPGEDP) are Extracellular-facing. A helical membrane pass occupies residues 226–248 (RFEIVEHFGIAWFTFELVARFAV). Residues 249–259 (APDFLKFFKNA) are Cytoplasmic-facing. Residues 260–280 (LNLIDLMSIVPFYITLVVNLV) traverse the membrane as a helical segment. Topologically, residues 281–290 (VESSPTLANL) are extracellular. The chain crosses the membrane as a helical; Voltage-sensor span at residues 291-311 (GRVAQVLRLMRIFRILKLARH). The Cytoplasmic segment spans residues 312-326 (STGLRSLGATLKYSY). The helical transmembrane segment at 327–348 (KEVGLLLLYLSVGISIFSVVAY) threads the bilayer. The Extracellular segment spans residues 349–361 (TIEKEENEGLATI). An intramembrane region (helical) is located at residues 362 to 373 (PACWWWATVSMT). Positions 374–379 (TVGYGD) match the Selectivity filter motif. Residues 374–381 (TVGYGDVV) lie within the membrane without spanning it. Over 382–388 (PGTTAGK) the chain is Extracellular. A helical membrane pass occupies residues 389–417 (LTASACILAGILVVVLPITLIFNKFSHFY). Residues 418-477 (RRQKQLESAMRSCDFGDGMKEVPSVNLRDYYAHKVKSLMASLTNMSRSSPSELSLDDSLH) are Cytoplasmic-facing.

The protein belongs to the potassium channel family. S (TC 1.A.1.2) subfamily. Kv9.2/KCNS2 sub-subfamily. Heterotetramer with KCNB1 and KCNB2. Does not form homomultimers. As to expression, detected in brain, lung and in pulmonary arteries.

The protein localises to the cell membrane. Potassium channel regulatory subunit that modulate the delayed rectifier voltage-gated potassium channel activity of KCNB1 and KCNB2 by altering their kinetics, expression levels, and shifting the half-inactivation potential to more polarized values. While it does not form functional channels on its own, it can form functional heterotetrameric channels with KCNB1 and KCNB2. Each regulatory subunit has unique regulatory properties that can lead to extensive inhibition, significant changes in kinetics, and/or substantial shifts in the voltage dependencies of the inactivation process. The protein is Delayed-rectifier potassium channel regulatory subunit KCNS2 of Rattus norvegicus (Rat).